The sequence spans 198 residues: Ribonuclease HII (198 aa).

One can recognise an RNase H type-2 domain in the interval 10 to 198 (QLVAGVDEVG…PVKRALGLAS (189 aa)). A divalent metal cation-binding residues include Asp-16, Glu-17, and Asp-108.

This sequence belongs to the RNase HII family. It depends on Mn(2+) as a cofactor. Mg(2+) is required as a cofactor.

The protein localises to the cytoplasm. It carries out the reaction Endonucleolytic cleavage to 5'-phosphomonoester.. Endonuclease that specifically degrades the RNA of RNA-DNA hybrids. This chain is Ribonuclease HII, found in Escherichia fergusonii (strain ATCC 35469 / DSM 13698 / CCUG 18766 / IAM 14443 / JCM 21226 / LMG 7866 / NBRC 102419 / NCTC 12128 / CDC 0568-73).